The sequence spans 380 residues: Cytochrome b (380 aa).

A run of 4 helical transmembrane segments spans residues 33–53 (FGSL…FLAM), 77–98 (WFIR…YIHV), 113–133 (WNVG…GYVL), and 178–198 (FFAF…VHLL). Residues His-83 and His-97 each coordinate heme b. The heme b site is built by His-182 and His-196. Position 201 (His-201) interacts with a ubiquinone. The next 4 helical transmembrane spans lie at 226–246 (TKDI…VLFA), 288–308 (LGGV…PYLY), 320–340 (LTQL…WIGA), and 347–367 (FITI…ILMP).

Belongs to the cytochrome b family. In terms of assembly, the cytochrome bc1 complex contains 11 subunits: 3 respiratory subunits (MT-CYB, CYC1 and UQCRFS1), 2 core proteins (UQCRC1 and UQCRC2) and 6 low-molecular weight proteins (UQCRH/QCR6, UQCRB/QCR7, UQCRQ/QCR8, UQCR10/QCR9, UQCR11/QCR10 and a cleavage product of UQCRFS1). This cytochrome bc1 complex then forms a dimer. Requires heme b as cofactor.

It is found in the mitochondrion inner membrane. Its function is as follows. Component of the ubiquinol-cytochrome c reductase complex (complex III or cytochrome b-c1 complex) that is part of the mitochondrial respiratory chain. The b-c1 complex mediates electron transfer from ubiquinol to cytochrome c. Contributes to the generation of a proton gradient across the mitochondrial membrane that is then used for ATP synthesis. This chain is Cytochrome b (MT-CYB), found in Cricetomys emini (Emin's giant pouched rat).